The sequence spans 171 residues: Protein GrpE (171 aa).

The disordered stretch occupies residues methionine 1–valine 20.

The protein belongs to the GrpE family. Homodimer.

The protein localises to the cytoplasm. Its function is as follows. Participates actively in the response to hyperosmotic and heat shock by preventing the aggregation of stress-denatured proteins, in association with DnaK and GrpE. It is the nucleotide exchange factor for DnaK and may function as a thermosensor. Unfolded proteins bind initially to DnaJ; upon interaction with the DnaJ-bound protein, DnaK hydrolyzes its bound ATP, resulting in the formation of a stable complex. GrpE releases ADP from DnaK; ATP binding to DnaK triggers the release of the substrate protein, thus completing the reaction cycle. Several rounds of ATP-dependent interactions between DnaJ, DnaK and GrpE are required for fully efficient folding. The chain is Protein GrpE from Acidithiobacillus ferrooxidans (strain ATCC 23270 / DSM 14882 / CIP 104768 / NCIMB 8455) (Ferrobacillus ferrooxidans (strain ATCC 23270)).